The sequence spans 218 residues: Molybdenum cofactor guanylyltransferase (218 aa).

Residues 16–18 (LAG), Lys28, Asn56, Asp74, and Asp109 each bind GTP. Position 109 (Asp109) interacts with Mg(2+).

Belongs to the MobA family. Monomer. It depends on Mg(2+) as a cofactor.

Its subcellular location is the cytoplasm. It catalyses the reaction Mo-molybdopterin + GTP + H(+) = Mo-molybdopterin guanine dinucleotide + diphosphate. Its function is as follows. Transfers a GMP moiety from GTP to Mo-molybdopterin (Mo-MPT) cofactor (Moco or molybdenum cofactor) to form Mo-molybdopterin guanine dinucleotide (Mo-MGD) cofactor. The sequence is that of Molybdenum cofactor guanylyltransferase from Sinorhizobium fredii (strain NBRC 101917 / NGR234).